The following is a 178-amino-acid chain: Thymidine kinase (178 aa).

13 to 20 (GPMFAGKS) contributes to the ATP binding site. Residue E85 is the Proton acceptor of the active site. F115 is a substrate binding site. Zn(2+) is bound by residues C140 and C143. Residue 159 to 163 (IEIIG) participates in substrate binding. Zn(2+) contacts are provided by C172 and C175.

Belongs to the thymidine kinase family.

It carries out the reaction thymidine + ATP = dTMP + ADP + H(+). The sequence is that of Thymidine kinase (TK) from Myxoma virus (strain Lausanne) (MYXV).